We begin with the raw amino-acid sequence, 182 residues long: ADP-ribosylation factor-like protein 11 (182 aa).

A lipid anchor (N-myristoyl glycine) is attached at G2. Residues 19-26, 63-67, and 122-125 each bind GTP; these read GLDSAGKT, DVGGQ, and NKQE.

It belongs to the small GTPase superfamily. Arf family.

Its function is as follows. May play a role in apoptosis. May act as a tumor suppressor. This is ADP-ribosylation factor-like protein 11 (ARL11) from Bos taurus (Bovine).